Here is a 663-residue protein sequence, read N- to C-terminus: Methionine--tRNA ligase (663 aa).

Positions 10-20 (AYTNGPLHLGH) match the 'HIGH' region motif. Cysteine 142, cysteine 145, cysteine 154, and cysteine 157 together coordinate Zn(2+). The 'KMSKS' region motif lies at 323–327 (KMSTS). Residue threonine 326 participates in ATP binding. The tRNA-binding domain maps to 563 to 663 (YFGNIDLRVG…RDLPVGSKIH (101 aa)).

This sequence belongs to the class-I aminoacyl-tRNA synthetase family. MetG type 1 subfamily. As to quaternary structure, homodimer. Zn(2+) is required as a cofactor.

The protein resides in the cytoplasm. It carries out the reaction tRNA(Met) + L-methionine + ATP = L-methionyl-tRNA(Met) + AMP + diphosphate. Is required not only for elongation of protein synthesis but also for the initiation of all mRNA translation through initiator tRNA(fMet) aminoacylation. This Methanococcus maripaludis (strain C5 / ATCC BAA-1333) protein is Methionine--tRNA ligase.